The sequence spans 152 residues: UPF0266 membrane protein CKO_01158 (152 aa).

A run of 3 helical transmembrane segments spans residues 6–26, 45–65, and 67–87; these read LVLV…QFIM, VDSV…VTSH, and AQIT…IFWV.

Belongs to the UPF0266 family.

Its subcellular location is the cell inner membrane. This chain is UPF0266 membrane protein CKO_01158, found in Citrobacter koseri (strain ATCC BAA-895 / CDC 4225-83 / SGSC4696).